The chain runs to 99 residues: UPF0122 protein UUR10_0158 (99 aa).

Belongs to the UPF0122 family.

In terms of biological role, might take part in the signal recognition particle (SRP) pathway. This is inferred from the conservation of its genetic proximity to ftsY/ffh. May be a regulatory protein. In Ureaplasma urealyticum serovar 10 (strain ATCC 33699 / Western), this protein is UPF0122 protein UUR10_0158.